A 296-amino-acid polypeptide reads, in one-letter code: Putative S-adenosyl-L-methionine-dependent methyltransferase MAP_3881 (296 aa).

S-adenosyl-L-methionine contacts are provided by residues Asp121 and 150–151 (DL).

It belongs to the UPF0677 family.

Its function is as follows. Exhibits S-adenosyl-L-methionine-dependent methyltransferase activity. The chain is Putative S-adenosyl-L-methionine-dependent methyltransferase MAP_3881 from Mycolicibacterium paratuberculosis (strain ATCC BAA-968 / K-10) (Mycobacterium paratuberculosis).